The primary structure comprises 140 residues: ATP synthase epsilon chain (140 aa).

Belongs to the ATPase epsilon chain family. As to quaternary structure, F-type ATPases have 2 components, CF(1) - the catalytic core - and CF(0) - the membrane proton channel. CF(1) has five subunits: alpha(3), beta(3), gamma(1), delta(1), epsilon(1). CF(0) has three main subunits: a, b and c.

It is found in the cell inner membrane. In terms of biological role, produces ATP from ADP in the presence of a proton gradient across the membrane. This is ATP synthase epsilon chain from Vibrio parahaemolyticus serotype O3:K6 (strain RIMD 2210633).